A 100-amino-acid polypeptide reads, in one-letter code: NADH-quinone oxidoreductase subunit K (100 aa).

A run of 3 helical transmembrane segments spans residues valine 4–leucine 24, leucine 29–phenylalanine 49, and isoleucine 61–isoleucine 81.

Belongs to the complex I subunit 4L family. In terms of assembly, NDH-1 is composed of 14 different subunits. Subunits NuoA, H, J, K, L, M, N constitute the membrane sector of the complex.

It localises to the cell inner membrane. The catalysed reaction is a quinone + NADH + 5 H(+)(in) = a quinol + NAD(+) + 4 H(+)(out). Its function is as follows. NDH-1 shuttles electrons from NADH, via FMN and iron-sulfur (Fe-S) centers, to quinones in the respiratory chain. The immediate electron acceptor for the enzyme in this species is believed to be ubiquinone. Couples the redox reaction to proton translocation (for every two electrons transferred, four hydrogen ions are translocated across the cytoplasmic membrane), and thus conserves the redox energy in a proton gradient. This is NADH-quinone oxidoreductase subunit K from Anaeromyxobacter sp. (strain Fw109-5).